A 322-amino-acid polypeptide reads, in one-letter code: MLDKIWYRSKPNLLSRVLQPISLVFIDIANKRKIKQQLKQYKSKIPIIVVGNISVGGTGKTPVVRMLAQQYLAQGKKPAIISRGYGAKADNYPFEVTSGTLATQCGDEPAMLFDALQAQVPIVIAPERVQAVKYIEKNFPDTDIIISDDGLQHYKLARDKEIVVVDAIRMFGNKLCLPAGPLREPIERLKEVDQIIVIGNCSDKDKELLKNYKNVTYAKVVATEFVNILTAKKVAKTEFNHQNVIAIAGIGNPTKFFKTLEESAINITAKKVFKDHHKFTQSDFEGIDSDITVVMTYKDAIKCKNFAKANWWYLDIALDINV.

54–61 (SVGGTGKT) contacts ATP.

The protein belongs to the LpxK family.

It catalyses the reaction a lipid A disaccharide + ATP = a lipid IVA + ADP + H(+). It participates in glycolipid biosynthesis; lipid IV(A) biosynthesis; lipid IV(A) from (3R)-3-hydroxytetradecanoyl-[acyl-carrier-protein] and UDP-N-acetyl-alpha-D-glucosamine: step 6/6. Functionally, transfers the gamma-phosphate of ATP to the 4'-position of a tetraacyldisaccharide 1-phosphate intermediate (termed DS-1-P) to form tetraacyldisaccharide 1,4'-bis-phosphate (lipid IVA). The sequence is that of Tetraacyldisaccharide 4'-kinase (lpxK) from Francisella novicida.